The chain runs to 187 residues: Elongation factor P (187 aa).

Belongs to the elongation factor P family.

Its subcellular location is the cytoplasm. It functions in the pathway protein biosynthesis; polypeptide chain elongation. Its function is as follows. Involved in peptide bond synthesis. Stimulates efficient translation and peptide-bond synthesis on native or reconstituted 70S ribosomes in vitro. Probably functions indirectly by altering the affinity of the ribosome for aminoacyl-tRNA, thus increasing their reactivity as acceptors for peptidyl transferase. This is Elongation factor P (efp) from Treponema pallidum (strain Nichols).